A 400-amino-acid chain; its full sequence is Tyrosine--tRNA ligase (400 aa).

The 'HIGH' region motif lies at 45–54 (PTAPDLHLGH). The 'KMSKS' region motif lies at 230–234 (KMSKS). ATP is bound at residue Lys-233. One can recognise an S4 RNA-binding domain in the interval 339–399 (EWIARVLVIA…GKRRFAKVII (61 aa)).

Belongs to the class-I aminoacyl-tRNA synthetase family. TyrS type 2 subfamily. In terms of assembly, homodimer.

The protein localises to the cytoplasm. The catalysed reaction is tRNA(Tyr) + L-tyrosine + ATP = L-tyrosyl-tRNA(Tyr) + AMP + diphosphate + H(+). Its function is as follows. Catalyzes the attachment of tyrosine to tRNA(Tyr) in a two-step reaction: tyrosine is first activated by ATP to form Tyr-AMP and then transferred to the acceptor end of tRNA(Tyr). This chain is Tyrosine--tRNA ligase, found in Helicobacter hepaticus (strain ATCC 51449 / 3B1).